A 244-amino-acid polypeptide reads, in one-letter code: Phosphoadenosine 5'-phosphosulfate reductase (244 aa).

The Nucleophile; cysteine thiosulfonate intermediate role is filled by Cys-239.

It belongs to the PAPS reductase family. CysH subfamily.

Its subcellular location is the cytoplasm. It catalyses the reaction [thioredoxin]-disulfide + sulfite + adenosine 3',5'-bisphosphate + 2 H(+) = [thioredoxin]-dithiol + 3'-phosphoadenylyl sulfate. Its pathway is sulfur metabolism; hydrogen sulfide biosynthesis; sulfite from sulfate: step 3/3. Catalyzes the formation of sulfite from phosphoadenosine 5'-phosphosulfate (PAPS) using thioredoxin as an electron donor. The chain is Phosphoadenosine 5'-phosphosulfate reductase from Sodalis glossinidius (strain morsitans).